The primary structure comprises 88 residues: Small ribosomal subunit protein bS20 (88 aa).

It belongs to the bacterial ribosomal protein bS20 family.

In terms of biological role, binds directly to 16S ribosomal RNA. This chain is Small ribosomal subunit protein bS20, found in Heliobacterium modesticaldum (strain ATCC 51547 / Ice1).